The sequence spans 277 residues: 4-hydroxy-3-prenylphenylpyruvate oxygenase/4-hydroxy-3-prenylbenzoate synthase (277 aa).

It belongs to the aldolase class II family. In terms of assembly, homotetramer. Fe(2+) is required as a cofactor.

The enzyme catalyses 3-dimethylallyl-4-hydroxyphenylpyruvate + O2 = 3-dimethylallyl-4-hydroxymandelate + CO2. It catalyses the reaction 3-dimethylallyl-4-hydroxymandelate + O2 = 3-dimethylallyl-4-hydroxybenzoate + CO2 + H2O. Its pathway is antibiotic biosynthesis. With respect to regulation, activated by ascorbate. Its function is as follows. Involved in the biosynthesis of ring A of the aminocoumarin antibiotic clorobiocin. Catalyzes two consecutive oxidative decarboxylations of 3-dimethylallyl-4-hydroxyphenylpyruvate (3DMA-4HPP) to yield 3-dimethylallyl-4-hydroxybenzoate (3DMA-4HB) via the 3-dimethylallyl-4-hydroxymandelic acid (3DMA-4HMA) intermediate. The polypeptide is 4-hydroxy-3-prenylphenylpyruvate oxygenase/4-hydroxy-3-prenylbenzoate synthase (Streptomyces roseochromogenus subsp. oscitans).